The primary structure comprises 86 residues: Large ribosomal subunit protein bL31 (86 aa).

Zn(2+)-binding residues include C16, C18, C38, and C41.

Belongs to the bacterial ribosomal protein bL31 family. Type A subfamily. Part of the 50S ribosomal subunit. It depends on Zn(2+) as a cofactor.

Its function is as follows. Binds the 23S rRNA. In Acidothermus cellulolyticus (strain ATCC 43068 / DSM 8971 / 11B), this protein is Large ribosomal subunit protein bL31.